The primary structure comprises 391 residues: Inositol-tetrakisphosphate 1-kinase 2 (391 aa).

Residues Lys-90 and Lys-132 each coordinate 1D-myo-inositol 1,3,4-trisphosphate. The ATP site is built by Arg-167 and Lys-217. The 207-residue stretch at 178-384 (KLSDCSGSLF…FFQNLAQVKY (207 aa)) folds into the ATP-grasp domain. Residues His-228 and Lys-260 each coordinate 1D-myo-inositol 1,3,4-trisphosphate. ATP contacts are provided by residues 249 to 260 (QEFVNHGGVMFK) and Ser-275. Residues Asp-340, Asp-355, and Asn-357 each contribute to the Mg(2+) site. Residue Asn-357 coordinates 1D-myo-inositol 1,3,4-trisphosphate.

Belongs to the ITPK1 family. As to quaternary structure, monomer. The cofactor is Mg(2+). As to expression, expressed in seedling roots, cotyledons, rosette leaves, cauline leaves, stems, flowers, siliques and seeds.

It catalyses the reaction 1D-myo-inositol 3,4,5,6-tetrakisphosphate + ATP = 1D-myo-inositol 1,3,4,5,6-pentakisphosphate + ADP + H(+). The enzyme catalyses 1D-myo-inositol 1,3,4-trisphosphate + ATP = 1D-myo-inositol 1,3,4,5-tetrakisphosphate + ADP + H(+). It carries out the reaction 1D-myo-inositol 1,3,4-trisphosphate + ATP = 1D-myo-inositol 1,3,4,6-tetrakisphosphate + ADP + H(+). Its function is as follows. Kinase that can phosphorylate various inositol polyphosphate such as Ins(3,4,5,6)P4 or Ins(1,3,4)P3. Phosphorylates Ins(3,4,5,6)P4 to form InsP5. This reaction is thought to have regulatory importance, since Ins(3,4,5,6)P4 is an inhibitor of plasma membrane Ca(2+)-activated Cl(-) channels, while Ins(1,3,4,5,6)P5 is not. Also phosphorylates Ins(1,3,4)P3 or a racemic mixture of Ins(1,4,6)P3 and Ins(3,4,6)P3 to form InsP4. Ins(1,3,4,6)P4 is an essential molecule in the hexakisphosphate (InsP6) pathway. Plays a role in seed coat development and lipid polyester barrier formation. This chain is Inositol-tetrakisphosphate 1-kinase 2 (ITPK2), found in Arabidopsis thaliana (Mouse-ear cress).